We begin with the raw amino-acid sequence, 93 residues long: YcgL domain-containing protein AHA_2135 (93 aa).

Positions 1 to 85 (MLCAVYKSRK…PPENLLEQHK (85 aa)) constitute a YcgL domain.

The protein is YcgL domain-containing protein AHA_2135 of Aeromonas hydrophila subsp. hydrophila (strain ATCC 7966 / DSM 30187 / BCRC 13018 / CCUG 14551 / JCM 1027 / KCTC 2358 / NCIMB 9240 / NCTC 8049).